Consider the following 405-residue polypeptide: Na(+)-translocating NADH-quinone reductase subunit F (405 aa).

A helical membrane pass occupies residues 3 to 23 (IILGIVMFTVIVLALALMILF). Residues 32-124 (GDITIKVNDE…DMDIEVPEEV (93 aa)) form the 2Fe-2S ferredoxin-type domain. [2Fe-2S] cluster is bound by residues Cys67, Cys73, Cys76, and Cys108. The FAD-binding FR-type domain maps to 127-267 (VKKWECTVIS…SGPFGEFFAK (141 aa)).

It belongs to the NqrF family. As to quaternary structure, composed of six subunits; NqrA, NqrB, NqrC, NqrD, NqrE and NqrF. [2Fe-2S] cluster serves as cofactor. Requires FAD as cofactor.

It localises to the cell inner membrane. It carries out the reaction a ubiquinone + n Na(+)(in) + NADH + H(+) = a ubiquinol + n Na(+)(out) + NAD(+). Its function is as follows. NQR complex catalyzes the reduction of ubiquinone-1 to ubiquinol by two successive reactions, coupled with the transport of Na(+) ions from the cytoplasm to the periplasm. The first step is catalyzed by NqrF, which accepts electrons from NADH and reduces ubiquinone-1 to ubisemiquinone by a one-electron transfer pathway. This is Na(+)-translocating NADH-quinone reductase subunit F from Neisseria gonorrhoeae (strain ATCC 700825 / FA 1090).